Consider the following 414-residue polypeptide: MELSSVSSFSLGTNPFISIPHNNNNNLKVSSYCCKSKSRVINSTNSKHCSPNNNNNNNTSNKTTHLLGLYGQSRCLLKPLSIFSCKDQRGNSIRASAQIEDRPPESGNLSALTNVKDFVSVCWEYVRPYTAKGVIICSSCLFGRELLENPNLFSWPLIFRALLGMLAILGSCFYTAGINQIFDMDIDRINKPDLPLVSGRISVESAWLLTLSPAIIGFILILKLNSGPLLTSLYCLAILSGTIYSVPPFRWKKNPITAFLCILMIHAGLNFSVYYASRAALGLAFVWSPSFSFITAFITFMTLTLASSKDLSDINGDRKFGVETFATKLGAKNITLLGTGLLLLNYVAAISTAIIWPKAFKSNIMLLSHAILAFSLFFQARELDRTNYTPEACKSFYEFIWILFSAEYVVYLFI.

The N-terminal 86 residues, 1–86, are a transit peptide targeting the chloroplast; sequence MELSSVSSFS…LKPLSIFSCK (86 aa). Helical transmembrane passes span 153–173, 201–221, 229–249, 256–276, 281–301, 336–356, 359–379, and 394–414; these read FSWP…GSCF, ISVE…FILI, LLTS…VPPF, ITAF…VYYA, LGLA…ITFM, LLGT…AIIW, AFKS…LFFQ, and KSFY…YLFI.

This sequence belongs to the UbiA prenyltransferase family. As to quaternary structure, component an active demethylxanthohumol (DMX) biosynthetic metabolon in glandular trichomes (lupulin glands) that encompasses a chalcone synthase (CHS) and a membrane-bound prenyltransferase. Interacts with PT2, forming a functional metabolon. Interacts with CHIL2; this interaction promotes catalytic activity. Mg(2+) is required as a cofactor. As to expression, expressed in trichomes.

The protein resides in the plastid. Its subcellular location is the chloroplast membrane. The catalysed reaction is 2',4,4',6'-tetrahydroxychalcone + dimethylallyl diphosphate = desmethylxanthohumol + diphosphate. The enzyme catalyses a 2-acylphloroglucinol + dimethylallyl diphosphate = a 2-acyl-4-prenylphloroglucinol + diphosphate. Its pathway is secondary metabolite biosynthesis. Its activity is regulated as follows. Stimulated by CHIL2 but inhibited by CHIL1. In terms of biological role, involved in the biosynthesis of prenylated phenolics natural products which contribute to the bitter taste of beer and display broad biological activities. Catalyzes the first prenylation step in the beta-bitter acid pathway. Uses dimethylallyl diphosphate (DMAPP) as the prenyl donor. The chain is 2-acylphloroglucinol 4-prenyltransferase from Humulus lupulus (European hop).